Reading from the N-terminus, the 156-residue chain is Ribosomal RNA large subunit methyltransferase H (156 aa).

Residues leucine 73, glycine 104, and 123 to 128 (LSPLTL) contribute to the S-adenosyl-L-methionine site.

Belongs to the RNA methyltransferase RlmH family. In terms of assembly, homodimer.

The protein localises to the cytoplasm. The enzyme catalyses pseudouridine(1915) in 23S rRNA + S-adenosyl-L-methionine = N(3)-methylpseudouridine(1915) in 23S rRNA + S-adenosyl-L-homocysteine + H(+). In terms of biological role, specifically methylates the pseudouridine at position 1915 (m3Psi1915) in 23S rRNA. The protein is Ribosomal RNA large subunit methyltransferase H of Pseudoalteromonas atlantica (strain T6c / ATCC BAA-1087).